A 352-amino-acid polypeptide reads, in one-letter code: Gap junction alpha-4 protein (352 aa).

Over 2 to 23 (GDWEFLEKLLDQVQEHSTSIGK) the chain is Cytoplasmic. A helical transmembrane segment spans residues 24–46 (IWLMVLFIFRILILGLAGESVWG). Residues 47–76 (DEQSDFICNTEQPGCTNVCYDKAFPISHVR) are Extracellular-facing. A helical transmembrane segment spans residues 77–99 (YWVLQFLFVSTPTLFYLGHVIYL). The Cytoplasmic portion of the chain corresponds to 100 to 153 (SRREEKLKQKESELRALDDKEQVEQAIAIIEKKKMKLYIQEDGTVKIKGALMCT). The chain crosses the membrane as a helical span at residues 154-176 (YLTSVIFKSLFEAGFLLGQWYLY). Over 177–208 (GFVMTPIYVCERVPCPHKVDCFVSRPMEKTIF) the chain is Extracellular. Residues 209 to 231 (IVFMLVVSLISLFLNVLELIHLV) traverse the membrane as a helical segment. The Cytoplasmic segment spans residues 232-352 (CKSMIDTLKK…SSSASKKQYV (121 aa)). The tract at residues 330-352 (KTHSTMEKPSTRASSSASKKQYV) is disordered. The segment covering 340-352 (TRASSSASKKQYV) has biased composition (polar residues).

This sequence belongs to the connexin family. Alpha-type (group II) subfamily. A connexon is composed of a hexamer of connexins.

The protein localises to the cell membrane. The protein resides in the cell junction. It localises to the gap junction. Its function is as follows. One gap junction consists of a cluster of closely packed pairs of transmembrane channels, the connexons, through which materials of low MW diffuse from one cell to a neighboring cell. This chain is Gap junction alpha-4 protein (gja4), found in Xenopus tropicalis (Western clawed frog).